The sequence spans 236 residues: CD81 antigen (236 aa).

Residues 1–12 (MGVEGCTKCIKY) lie on the Cytoplasmic side of the membrane. A helical transmembrane segment spans residues 13–33 (LLFVFNFVFWLAGGVILGVAL). Residues 34-63 (WLRHDPQTTNLLYLELGDRPAPNTFYVGIY) lie on the Extracellular side of the membrane. Residues 64–84 (ILIAVGAVMMFVGFLGCYGAI) traverse the membrane as a helical segment. Over 85-89 (QESQC) the chain is Cytoplasmic. A helical transmembrane segment spans residues 90 to 112 (LLGTFFTCLVILFACEVAAGIWG). The Extracellular portion of the chain corresponds to 113-201 (FVNKDQIAKD…GKIDELFSGK (89 aa)). Intrachain disulfides connect Cys156-Cys190 and Cys157-Cys175. The chain crosses the membrane as a helical span at residues 202–224 (LYLIGIAAIVVAVIMIFEMILSM). Cholesterol is bound at residue Glu219. Over 225-236 (VLCCGIRNSSVY) the chain is Cytoplasmic.

This sequence belongs to the tetraspanin (TM4SF) family. As to quaternary structure, homodimer. Part of a complex composed of CD19, CR2/CD21, CD81 and IFITM1/CD225 in the membrane of mature B cells. Interacts (via the second extracellular domain) with CD19; this interaction is initiated early during biosynthesis in the ER and enables trafficking of only properly folded CD19. Part of a complex that includes MHC class II/HLA-DR molecules and IFITM1. Interacts with IFITM1. Interacts with IFITM2 and IFITM3. Part of integrin-tetraspanin complex composed of CD9, CD81, beta-1 and beta-2 integrins in the membrane of monocyte/macrophages. Interacts (via the second extracellular domain) with integrin ITGAV:ITGB3. Interacts with CD247/CD3 zeta, ICAM1 and CD9 at the immune synapse on T cell membrane. Part of a GPCR-tetraspanin complex consisting at least of ADGRG1, CD81, possibly CD9, and GNA11 in which CD81 enhances the association of ADGRG1 with GNA11. Part of a complex composed of CD9, CD81, PTGFRN and IGSF8. Interacts directly with IGSF8. Interacts with CD53 and SCIMP. Interacts with SAMHD1 (via its C-terminus). Interacts with glypican GPC3 and with the transcriptional repressor HHEX; binding to GPC3 decreases the availability of free CD81 for binding to HHEX, resulting in nuclear translocation of HHEX and transcriptional repression. Interacts with CLDN1. Interacts with CLDN6 and CLDN9. In terms of processing, not glycosylated. Likely constitutively palmitoylated at low levels. Protein palmitoylation is up-regulated upon coligation of BCR and CD9-C2R-CD81 complexes in lipid rafts.

It is found in the cell membrane. The protein localises to the basolateral cell membrane. In terms of biological role, structural component of specialized membrane microdomains known as tetraspanin-enriched microdomains (TERMs), which act as platforms for receptor clustering and signaling. Essential for trafficking and compartmentalization of CD19 receptor on the surface of activated B cells. Upon initial encounter with microbial pathogens, enables the assembly of CD19-CR2/CD21 and B cell receptor (BCR) complexes at signaling TERMs, lowering the threshold dose of antigen required to trigger B cell clonal expansion and antibody production. In T cells, facilitates the localization of CD247/CD3 zeta at antigen-induced synapses with B cells, providing for costimulation and polarization toward T helper type 2 phenotype. Present in MHC class II compartments, may also play a role in antigen presentation. Can act both as positive and negative regulator of homotypic or heterotypic cell-cell fusion processes. Positively regulates sperm-egg fusion and may be involved in acrosome reaction. In myoblasts, associates with CD9 and PTGFRN and inhibits myotube fusion during muscle regeneration. In macrophages, associates with CD9 and beta-1 and beta-2 integrins, and prevents macrophage fusion into multinucleated giant cells specialized in ingesting complement-opsonized large particles. Also prevents the fusion of mononuclear cell progenitors into osteoclasts in charge of bone resorption. May regulate the compartmentalization of enzymatic activities. In T cells, defines the subcellular localization of dNTPase SAMHD1 and permits its degradation by the proteasome, thereby controlling intracellular dNTP levels. Also involved in cell adhesion and motility. Positively regulates integrin-mediated adhesion of macrophages, particularly relevant for the inflammatory response in the lung. In Bos taurus (Bovine), this protein is CD81 antigen (CD81).